Here is a 134-residue protein sequence, read N- to C-terminus: Lymphocyte antigen 6S (134 aa).

An N-terminal signal peptide occupies residues 1 to 26 (MSSLQAMKTLSLVLLVALLSMERAQG). The region spanning 28–76 (RCYRCLAVLEGASCSVVSCPFLDGVCVSQKVSVFGSKVRGENKLSLLSC) is the UPAR/Ly6 domain. Disulfide bonds link cysteine 29–cysteine 53, cysteine 32–cysteine 41, cysteine 76–cysteine 98, and cysteine 99–cysteine 104. A lipid anchor (GPI-anchor amidated asparagine) is attached at asparagine 105. A propeptide spans 106–134 (AVVLAASSPWALCVQLLLSLGSVFLWALL) (removed in mature form).

It is found in the cell membrane. The protein is Lymphocyte antigen 6S of Homo sapiens (Human).